The following is a 597-amino-acid chain: Arginine--tRNA ligase (597 aa).

A 'HIGH' region motif is present at residues 138 to 148; sequence ANPTGPMHVGH.

Belongs to the class-I aminoacyl-tRNA synthetase family. In terms of assembly, monomer.

It is found in the cytoplasm. The catalysed reaction is tRNA(Arg) + L-arginine + ATP = L-arginyl-tRNA(Arg) + AMP + diphosphate. This is Arginine--tRNA ligase from Nitrobacter hamburgensis (strain DSM 10229 / NCIMB 13809 / X14).